A 565-amino-acid polypeptide reads, in one-letter code: Periplasmic trehalase (565 aa).

The first 30 residues, 1-30 (MKSPAPSRPQKMALIPACIFLCFAALSVQA), serve as a signal peptide directing secretion. Substrate contacts are provided by residues arginine 152, 159–160 (WD), asparagine 196, 205–207 (RSQ), 277–279 (RPE), and glycine 310. Active-site proton donor/acceptor residues include aspartate 312 and glutamate 496. A substrate-binding site is contributed by glutamate 511. Positions 540-565 (DNVPATHPTVKSATTQPSTKEAQPTP) are disordered. Over residues 548–565 (TVKSATTQPSTKEAQPTP) the composition is skewed to polar residues.

The protein belongs to the glycosyl hydrolase 37 family. Monomer.

It localises to the periplasm. The enzyme catalyses alpha,alpha-trehalose + H2O = alpha-D-glucose + beta-D-glucose. Functionally, provides the cells with the ability to utilize trehalose at high osmolarity by splitting it into glucose molecules that can subsequently be taken up by the phosphotransferase-mediated uptake system. The chain is Periplasmic trehalase from Shigella flexneri.